A 130-amino-acid polypeptide reads, in one-letter code: Hydrogenase maturation factor HypA (130 aa).

His-2 contacts Ni(2+). 4 residues coordinate Zn(2+): Cys-74, Cys-77, Cys-90, and Cys-93.

The protein belongs to the HypA/HybF family.

Functionally, involved in the maturation of [NiFe] hydrogenases. Required for nickel insertion into the metal center of the hydrogenase. The chain is Hydrogenase maturation factor HypA from Desulfatibacillum aliphaticivorans.